Here is a 505-residue protein sequence, read N- to C-terminus: MAADNSKQFWKRSAKLPGSIQPVYGAQHPPLDPRLTKNFIKERSKVGTVPLKNKKASSFHEFARNTSDAWDIGDDEEEDFSSPSFQTLNSKVALATAAQVLENHSKLRVKPERSQSTTSDVPANYKVIKSSSDAQLSRNSSDTCLRNPLHKQQSLPLRPIIPLVARISDQNASGAPPMTVREKTRLEKFRQLLSSHNTDLDELRKCSWPGVPREVRPVTWRLLSGYLPANTERRKLTLQRKREEYFGFIEQYYDSRNEEHHQDTYRQIHIDIPRTNPLIPLFQQPLVQEIFERILFIWAIRHPASGYVQGINDLVTPFFVVFLSEYVEEDVENFDVTNLSQDMLRSIEADSFWCMSKLLDGIQDNYTFAQPGIQKKVKALEELVSRIDEQVHNHFRRYEVEYLQFAFRWMNNLLMRELPLRCTIRLWDTYQSEPEGFSHFHLYVCAAFLIKWRKEILDEEDFQGLLMLLQNLPTIHWGNEEIGLLLAEAYRLKYMFADAPNHYRR.

Ala-2 carries the N-acetylalanine modification. Phosphoserine occurs at positions 58 and 116. The tract at residues 105 to 146 (SKLRVKPERSQSTTSDVPANYKVIKSSSDAQLSRNSSDTCLR) is disordered. Positions 129 to 146 (KSSSDAQLSRNSSDTCLR) are enriched in polar residues. Residue Ser-154 is modified to Phosphoserine. Positions 210 to 434 (GVPREVRPVT…RLWDTYQSEP (225 aa)) constitute a Rab-GAP TBC domain.

In terms of assembly, interacts with ACBD3 and ARFGEF1. Interacts with YWHAB, YWHAE, YWHAG, YWHAH, YWHAQ and YWHAZ.

Functionally, may act as a GTPase-activating protein for Rab family protein(s). In Macaca fascicularis (Crab-eating macaque), this protein is TBC1 domain family member 22B (TBC1D22B).